The sequence spans 125 residues: Large ribosomal subunit protein bL12 (125 aa).

Belongs to the bacterial ribosomal protein bL12 family. As to quaternary structure, homodimer. Part of the ribosomal stalk of the 50S ribosomal subunit. Forms a multimeric L10(L12)X complex, where L10 forms an elongated spine to which 2 to 4 L12 dimers bind in a sequential fashion. Binds GTP-bound translation factors.

Forms part of the ribosomal stalk which helps the ribosome interact with GTP-bound translation factors. Is thus essential for accurate translation. This is Large ribosomal subunit protein bL12 from Thermus thermophilus (strain ATCC BAA-163 / DSM 7039 / HB27).